The primary structure comprises 354 residues: Uroporphyrinogen decarboxylase (354 aa).

Substrate contacts are provided by residues 27 to 31 (RQAGR), aspartate 77, tyrosine 154, threonine 209, and histidine 327.

It belongs to the uroporphyrinogen decarboxylase family. In terms of assembly, homodimer.

The protein resides in the cytoplasm. The enzyme catalyses uroporphyrinogen III + 4 H(+) = coproporphyrinogen III + 4 CO2. It participates in porphyrin-containing compound metabolism; protoporphyrin-IX biosynthesis; coproporphyrinogen-III from 5-aminolevulinate: step 4/4. In terms of biological role, catalyzes the decarboxylation of four acetate groups of uroporphyrinogen-III to yield coproporphyrinogen-III. The polypeptide is Uroporphyrinogen decarboxylase (Salmonella paratyphi A (strain ATCC 9150 / SARB42)).